The chain runs to 708 residues: E3 ubiquitin-protein ligase Praja-2 (708 aa).

A compositionally biased stretch (basic and acidic residues) spans 1–10; the sequence is MSQYTEKEPA. Disordered stretches follow at residues 1–30 and 53–90; these read MSQY…GYQT and ERSL…SSLP. N-acetylserine is present on Ser2. A compositionally biased stretch (polar residues) spans 74 to 90; that stretch reads ENSSGSSPLDQVDSSLP. Position 196 is a phosphoserine (Ser196). Disordered stretches follow at residues 244-342, 385-411, and 425-495; these read GDTE…KQRS, TQRE…DNPF, and DEDS…QTSL. Thr246 carries the phosphothreonine modification. Polar residues predominate over residues 249–276; it reads VHQNSQEIQRSSQDEMVSTKQQNNTSQE. Phosphoserine is present on residues Ser253, Ser309, and Ser323. A compositionally biased stretch (polar residues) spans 322–332; it reads ISSSQVDQETG. Positions 333-342 are enriched in basic and acidic residues; that stretch reads FNRHEAKQRS. Residue Ser342 is modified to Phosphoserine; by PKA. The residue at position 389 (Thr389) is a Phosphothreonine; by PKA. A Phosphoserine modification is found at Ser432. The segment covering 467–483 has biased composition (acidic residues); that stretch reads NEPELQSDSSGPEEENQ. Positions 484 to 493 are enriched in polar residues; the sequence is ELSLQEGEQT. Residues 531–708 form an interaction with PRKAR1A, PRKAR2A and PRKAR2B region; sequence DGNNNLEDDS…PSNDSIAEAP (178 aa). Residues 550–570 form a mediates interaction with TBC1D31 region; it reads WSLFDGFADGLGVAEAISYVD. The segment at 634–675 adopts an RING-type; atypical zinc-finger fold; that stretch reads CPICCSEYIKDDIATELPCHHFFHKPCVSIWLQKSGTCPVCR. The interval 685 to 708 is disordered; that stretch reads ASAAPSSEPDPDAPPSNDSIAEAP. The span at 699–708 shows a compositional bias: low complexity; sequence PSNDSIAEAP.

Binds ubiquitin-conjugating enzymes (E2s). In vitro, interacts with the ubiquitin-conjugating enzyme, UBE2D2. The phosphorylated form interacts with PRKAR1A, PRKAR2A and PRKAR2B. Binds the catalytic subunits of cAMP-dependent protein kinase. Interacts with MFHAS1. Interacts with TBC1D31; the interaction is direct and recruits PJA2 to centrosomes.

Its subcellular location is the cytoplasm. It is found in the cell membrane. The protein resides in the endoplasmic reticulum membrane. It localises to the golgi apparatus membrane. The protein localises to the synapse. Its subcellular location is the postsynaptic density. It is found in the cytoskeleton. The protein resides in the microtubule organizing center. It localises to the centrosome. The enzyme catalyses S-ubiquitinyl-[E2 ubiquitin-conjugating enzyme]-L-cysteine + [acceptor protein]-L-lysine = [E2 ubiquitin-conjugating enzyme]-L-cysteine + N(6)-ubiquitinyl-[acceptor protein]-L-lysine.. Its pathway is protein modification; protein ubiquitination. Functionally, has E2-dependent E3 ubiquitin-protein ligase activity. Responsible for ubiquitination of cAMP-dependent protein kinase type I and type II-alpha/beta regulatory subunits and for targeting them for proteasomal degradation. Essential for PKA-mediated long-term memory processes. Through the ubiquitination of MFHAS1, positively regulates the TLR2 signaling pathway that leads to the activation of the downstream p38 and JNK MAP kinases and promotes the polarization of macrophages toward the pro-inflammatory M1 phenotype. Plays a role in ciliogenesis by ubiquitinating OFD1. This Pongo abelii (Sumatran orangutan) protein is E3 ubiquitin-protein ligase Praja-2 (PJA2).